Consider the following 288-residue polypeptide: Ribosome biogenesis GTPase A (288 aa).

Positions 14 to 179 (RRQVTEKLKL…LLDTPGILWP (166 aa)) constitute a CP-type G domain. GTP contacts are provided by residues 58-61 (NKVD), 131-136 (NVGKST), and G175.

This sequence belongs to the TRAFAC class YlqF/YawG GTPase family. MTG1 subfamily. In terms of assembly, interacts with ctc. Interacts with the immature 50S ribosome subunit. 2 molecules of rbgA bind to one 50S subunit.

The protein localises to the cytoplasm. Its function is as follows. Essential protein that is required for a late step of 50S ribosomal subunit assembly. Has GTPase activity that is stimulated by interaction with the immature 50S ribosome subunit. Binds to the 23S rRNA. Required for the association of ribosomal proteins rplP and rpmA with the large subunit. The polypeptide is Ribosome biogenesis GTPase A (Priestia megaterium (strain DSM 319 / IMG 1521) (Bacillus megaterium)).